Reading from the N-terminus, the 345-residue chain is MDFVSKYMSCLSSWGLDLQPGLQSVGAAVLLATGGLFLASRVLTFVRVLLSLFVLPGKPLRSFGPKGSWAVVTGASDGLGKEFALQLARAGFNIVLVSRTASKLATLAEEITAKHSVQTRTLAMDFAANDDTDYEDLKTLVDGLDVSILINNVGKSHDIPVPFALTPEDEMTDIVTINCLGTLRATQLVIPGMMQRRRGLVLTMGSFGGLLPTPLLATYSGSKAFLQQWSTSLGSELEPYGITVELVQAYLITSAMSKVRRTSALIPSPRAFVSSVLSKIGRNGGSPTYSYSSSPYWSHGLMAYFLTCVLQPMGKLVVGQNRTMHEAIRKRALRKAEREKGKKST.

Residues 26-46 (GAAVLLATGGLFLASRVLTFV) form a helical membrane-spanning segment. NADP(+) is bound by residues valine 71, aspartate 125, aspartate 133, asparagine 152, tyrosine 219, lysine 223, isoleucine 252, and serine 254. The active-site Proton donor is the tyrosine 219. Lysine 223 serves as the catalytic Lowers pKa of active site Tyr.

It belongs to the short-chain dehydrogenases/reductases (SDR) family.

The protein localises to the endoplasmic reticulum membrane. The enzyme catalyses a very-long-chain (3R)-3-hydroxyacyl-CoA + NADP(+) = a very-long-chain 3-oxoacyl-CoA + NADPH + H(+). It functions in the pathway lipid metabolism; fatty acid biosynthesis. Its function is as follows. Component of the microsomal membrane bound fatty acid elongation system, which produces the 26-carbon very long-chain fatty acids (VLCFA) from palmitate. Catalyzes the reduction of the 3-ketoacyl-CoA intermediate that is formed in each cycle of fatty acid elongation. VLCFAs serve as precursors for ceramide and sphingolipids. The polypeptide is Very-long-chain 3-oxoacyl-CoA reductase (Aspergillus clavatus (strain ATCC 1007 / CBS 513.65 / DSM 816 / NCTC 3887 / NRRL 1 / QM 1276 / 107)).